The primary structure comprises 226 residues: Thymidylate kinase (226 aa).

An ATP-binding site is contributed by 12-19 (GIDGAGKS).

Belongs to the thymidylate kinase family.

The enzyme catalyses dTMP + ATP = dTDP + ADP. Phosphorylation of dTMP to form dTDP in both de novo and salvage pathways of dTTP synthesis. The polypeptide is Thymidylate kinase (Verminephrobacter eiseniae (strain EF01-2)).